The chain runs to 431 residues: Adenylosuccinate synthetase (431 aa).

GTP-binding positions include 12 to 18 (GDEGKGK) and 40 to 42 (GHS). Aspartate 13 (proton acceptor) is an active-site residue. Mg(2+)-binding residues include aspartate 13 and glycine 40. IMP-binding positions include 13-16 (DEGK) and 38-41 (NAGH). Histidine 41 serves as the catalytic Proton donor. The segment at 114–133 (QQQERDRSKNGEKIGTTNKG) is disordered. The span at 115-125 (QQERDRSKNGE) shows a compositional bias: basic and acidic residues. 5 residues coordinate IMP: threonine 130, arginine 144, glutamine 225, threonine 240, and arginine 304. 300-306 (TVTKRPR) contacts substrate. Residues arginine 306, 332-334 (CLD), and 414-416 (SIG) each bind GTP.

Belongs to the adenylosuccinate synthetase family. As to quaternary structure, homodimer. The cofactor is Mg(2+).

It localises to the cytoplasm. It carries out the reaction IMP + L-aspartate + GTP = N(6)-(1,2-dicarboxyethyl)-AMP + GDP + phosphate + 2 H(+). Its pathway is purine metabolism; AMP biosynthesis via de novo pathway; AMP from IMP: step 1/2. Functionally, plays an important role in the de novo pathway of purine nucleotide biosynthesis. Catalyzes the first committed step in the biosynthesis of AMP from IMP. The polypeptide is Adenylosuccinate synthetase (Pediococcus pentosaceus (strain ATCC 25745 / CCUG 21536 / LMG 10740 / 183-1w)).